Consider the following 625-residue polypeptide: Zinc finger protein 652-A (625 aa).

The interval Phe-80 to Lys-255 is disordered. The segment covering Arg-82 to Ser-100 has biased composition (basic and acidic residues). Positions Gly-101–Glu-127 are enriched in acidic residues. Positions Lys-150–Ser-166 are enriched in basic and acidic residues. The segment covering Asp-167–Asn-186 has biased composition (acidic residues). Residues Pro-240–Lys-255 show a composition bias toward basic and acidic residues. The C2H2-type 1 zinc-finger motif lies at Leu-258–His-281. A C2H2-type 2; degenerate zinc finger spans residues Gln-285–Asp-307. 6 consecutive C2H2-type zinc fingers follow at residues Ile-312–His-335, Phe-342–His-364, Phe-370–His-392, Phe-398–His-420, Phe-426–His-448, and Phe-454–His-476. Residues Tyr-482–Phe-505 form a C2H2-type 9; degenerate zinc finger.

This sequence belongs to the krueppel C2H2-type zinc-finger protein family.

The protein resides in the nucleus. In terms of biological role, may be involved in transcriptional regulation. This chain is Zinc finger protein 652-A (znf652-a), found in Xenopus laevis (African clawed frog).